Here is a 750-residue protein sequence, read N- to C-terminus: Photosystem I P700 chlorophyll a apoprotein A1 (750 aa).

8 consecutive transmembrane segments (helical) span residues 70 to 93 (VFSA…FHGA), 156 to 179 (LYCT…FHYH), 195 to 219 (LNHH…HVSL), 291 to 309 (IAHH…GHMY), 346 to 369 (WHAQ…HHMY), 385 to 411 (LSLF…IFMV), 433 to 455 (AIIS…LYIH), and 531 to 549 (FLVH…LILL). [4Fe-4S] cluster-binding residues include Cys573 and Cys582. 2 helical membrane-spanning segments follow: residues 589–610 (HVFL…HFSW) and 664–686 (LSAY…MFLF). Residue His675 coordinates chlorophyll a'. Positions 683 and 691 each coordinate chlorophyll a. Trp692 contributes to the phylloquinone binding site. A helical membrane pass occupies residues 724-744 (TVGVTHYLLGGIATTWAFFLA).

This sequence belongs to the PsaA/PsaB family. In terms of assembly, the PsaA/B heterodimer binds the P700 chlorophyll special pair and subsequent electron acceptors. PSI consists of a core antenna complex that captures photons, and an electron transfer chain that converts photonic excitation into a charge separation. The eukaryotic PSI reaction center is composed of at least 11 subunits. The cofactor is P700 is a chlorophyll a/chlorophyll a' dimer, A0 is one or more chlorophyll a, A1 is one or both phylloquinones and FX is a shared 4Fe-4S iron-sulfur center..

Its subcellular location is the plastid. The protein resides in the chloroplast thylakoid membrane. It carries out the reaction reduced [plastocyanin] + hnu + oxidized [2Fe-2S]-[ferredoxin] = oxidized [plastocyanin] + reduced [2Fe-2S]-[ferredoxin]. Functionally, psaA and PsaB bind P700, the primary electron donor of photosystem I (PSI), as well as the electron acceptors A0, A1 and FX. PSI is a plastocyanin-ferredoxin oxidoreductase, converting photonic excitation into a charge separation, which transfers an electron from the donor P700 chlorophyll pair to the spectroscopically characterized acceptors A0, A1, FX, FA and FB in turn. Oxidized P700 is reduced on the lumenal side of the thylakoid membrane by plastocyanin. This is Photosystem I P700 chlorophyll a apoprotein A1 from Oenothera elata subsp. hookeri (Hooker's evening primrose).